The following is a 359-amino-acid chain: Ornithine carbamoyltransferase, mitochondrial (359 aa).

A mitochondrion-targeting transit peptide spans 1 to 24 (MASLRSVLKSQSLRHTVRSYSSQT). Carbamoyl phosphate is bound by residues 87–90 (STRT), Arg138, His165, and Gln168. 4 residues coordinate L-ornithine: Asn205, Asp271, Ser275, and Met276. Cys313 serves as the catalytic Proton acceptor. Carbamoyl phosphate is bound by residues 313–314 (CL) and Arg340.

The protein belongs to the aspartate/ornithine carbamoyltransferase superfamily. OTCase family. In terms of assembly, homotrimer.

It is found in the mitochondrion matrix. It catalyses the reaction carbamoyl phosphate + L-ornithine = L-citrulline + phosphate + H(+). It participates in amino-acid biosynthesis; L-arginine biosynthesis; L-arginine from L-ornithine and carbamoyl phosphate: step 1/3. The sequence is that of Ornithine carbamoyltransferase, mitochondrial (argB) from Emericella nidulans (strain FGSC A4 / ATCC 38163 / CBS 112.46 / NRRL 194 / M139) (Aspergillus nidulans).